Reading from the N-terminus, the 115-residue chain is uncharacterized protein (115 aa).

An N-terminal signal peptide occupies residues 1-20; that stretch reads MKTFFRTVLFGSLMAVCANS.

This is an uncharacterized protein from Escherichia coli O6:H1 (strain CFT073 / ATCC 700928 / UPEC).